A 238-amino-acid chain; its full sequence is MLCCMRRTKQVEKNDDDQKIEQDGIKPEDKAHKAATKIQASFRGHITRKKLKGEKKDDVQAAEAEANKKDEAPVADGVEKKGEGTTTAEAAPATGSKPDEPGKAGETPSEEKKGEGDAATEQAAPQAPASSEEKAGSAETESATKASTDNSPSSKAEDAPAKEEPKQADVPAAVTAAAATTPAAEDAAAKATAQPPTETGESSQAEENIEAVDETKPKESARQDEGKEEEPEADQEHA.

The disordered stretch occupies residues 1 to 238 (MLCCMRRTKQ…EEPEADQEHA (238 aa)). Residues cysteine 3 and cysteine 4 are each lipidated (S-palmitoyl cysteine). Basic and acidic residues predominate over residues 9–32 (KQVEKNDDDQKIEQDGIKPEDKAH). The IQ domain maps to 31–60 (AHKAATKIQASFRGHITRKKLKGEKKDDVQ). Residue serine 41 is modified to Phosphoserine; by PHK and PKC. Positions 54–83 (EKKDDVQAAEAEANKKDEAPVADGVEKKGE) are enriched in basic and acidic residues. Over residues 84-95 (GTTTAEAAPATG) the composition is skewed to low complexity. Residues 97–116 (KPDEPGKAGETPSEEKKGEG) show a composition bias toward basic and acidic residues. The span at 119-130 (ATEQAAPQAPAS) shows a compositional bias: low complexity. Positions 139–154 (ETESATKASTDNSPSS) are enriched in polar residues. A phosphoserine mark is found at serine 151, serine 153, and serine 154. Basic and acidic residues predominate over residues 155-167 (KAEDAPAKEEPKQ). Residues 168–199 (ADVPAAVTAAAATTPAAEDAAAKATAQPPTET) show a composition bias toward low complexity. Phosphothreonine is present on threonine 181. Residues serine 202 and serine 203 each carry the phosphoserine; by CK2 modification. Positions 213-225 (DETKPKESARQDE) are enriched in basic and acidic residues. Residues 226–238 (GKEEEPEADQEHA) are compositionally biased toward acidic residues.

It belongs to the neuromodulin family. In terms of assembly, identified in a complex containing FGFR4, NCAM1, CDH2, PLCG1, FRS2, SRC, SHC1, GAP43 and CTTN. Interacts (via IQ domain) with calmodulin. Binds calmodulin with a greater affinity in the absence of Ca(2+) than in its presence. In terms of processing, phosphorylated. Phosphorylation of this protein by a protein kinase C is specifically correlated with certain forms of synaptic plasticity. Palmitoylated by ZDHHC3. Palmitoylation is regulated by ARF6 and is essential for plasma membrane association and axonal and dendritic filopodia induction. Deacylated by LYPLA2.

The protein resides in the cell membrane. The protein localises to the cell projection. It localises to the growth cone membrane. It is found in the synapse. Its subcellular location is the filopodium membrane. The protein resides in the perikaryon. The protein localises to the dendrite. It localises to the axon. It is found in the cytoplasm. Its function is as follows. This protein is associated with nerve growth. It is a major component of the motile 'growth cones' that form the tips of elongating axons. Plays a role in axonal and dendritic filopodia induction. This chain is Neuromodulin (GAP43), found in Homo sapiens (Human).